The chain runs to 289 residues: UPF0725 protein At1g27860 (289 aa).

The interval 266-289 (DQQRSMTLPSGEQAESSKKRPRLS) is disordered. A compositionally biased stretch (polar residues) spans 268 to 279 (QRSMTLPSGEQA).

Belongs to the UPF0725 (EMB2204) family.

This chain is UPF0725 protein At1g27860, found in Arabidopsis thaliana (Mouse-ear cress).